We begin with the raw amino-acid sequence, 1453 residues long: Spike glycoprotein (1453 aa).

An N-terminal signal peptide occupies residues 1–31; that stretch reads MIVLILCLLLFSYNSVICTSNNDCVQGNVTQ. 2 S1 regions span residues 19-791 and 32-780; these read TSNN…ERTR and LPGN…FYYY. At 32–1394 the chain is on the virion surface side; it reads LPGNENIIKD…NRIETYVKWP (1363 aa). Residues 661–805 form an interaction with host ANPEP region; it reads VIYEEGDNIV…DSNDVDCEPI (145 aa). S2 regions lie at residues 781 to 1453 and 794 to 1453; these read SIYN…VHVH and AIDS…VHVH. The fusion peptide stretch occupies residues 1026 to 1047; sequence AGGITLGSLGGGAVSIPFAIAV. The segment at 1041-1160 is heptad repeat 1 (HR1); the sequence is IPFAIAVQAR…QVDRLITGRL (120 aa). Coiled-coil stretches lie at residues 1108–1152 and 1342–1384; these read QDVV…DAQV and TYLN…LEWL. The heptad repeat 2 (HR2) stretch occupies residues 1309–1406; that stretch reads PDYIDINQTV…VWLLIGLVVI (98 aa). The chain crosses the membrane as a helical span at residues 1395 to 1414; the sequence is WYVWLLIGLVVIFCIPILLF. Residues 1415–1453 are Intravirion-facing; that stretch reads CCCSTGCCGCIGCLGSCCHSICSRRQFESYEPIEKVHVH. The KxHxx signature appears at 1449–1453; sequence KVHVH.

The protein belongs to the alphacoronaviruses spike protein family. Homotrimer. During virus morphogenesis, found in a complex with M and HE proteins. Interacts with host ANPEP.

The protein resides in the virion membrane. Its subcellular location is the host endoplasmic reticulum-Golgi intermediate compartment membrane. In terms of biological role, S1 region attaches the virion to the cell membrane by interacting with host ANPEP/aminopeptidase N, initiating the infection. Binding to the receptor probably induces conformational changes in the S glycoprotein unmasking the fusion peptide of S2 region and activating membranes fusion. S2 region belongs to the class I viral fusion protein. Under the current model, the protein has at least 3 conformational states: pre-fusion native state, pre-hairpin intermediate state, and post-fusion hairpin state. During viral and target cell membrane fusion, the coiled coil regions (heptad repeats) regions assume a trimer-of-hairpins structure, positioning the fusion peptide in close proximity to the C-terminal region of the ectodomain. The formation of this structure appears to drive apposition and subsequent fusion of viral and target cell membranes. The chain is Spike glycoprotein from Canis lupus familiaris (Dog).